The sequence spans 397 residues: Izumo sperm-egg fusion protein 1 (397 aa).

The signal sequence occupies residues M1–P21. Disulfide bonds link C22/C149, C25/C152, C135/C159, C139/C165, and C182/C233. Residues C22–R319 lie on the Extracellular side of the membrane. Residues W148 to R160 are important for interaction with IZUMO1R. Residues E167–T251 enclose the Ig-like C2-type domain. N204 is a glycosylation site (N-linked (GlcNAc...) asparagine). The disordered stretch occupies residues E271 to L292. The helical transmembrane segment at L320–L340 threads the bilayer. At H341–N397 the chain is on the cytoplasmic side. Residues N351 to N397 form a disordered region. Residues A360–M373 show a composition bias toward polar residues. S379 is subject to Phosphoserine. Residues S388–N397 are compositionally biased toward basic and acidic residues.

The protein belongs to the Izumo family. Monomer, homodimer; disulfide-linked and homooligomer; depending on the context. Interacts with IZUMO1R/JUNO. IZUMO1 and IZUMO1R/JUNO form a complex with 1:1 stoichiometry. In gamete recognition, IZUMO1R/JUNO first binds to monomeric IZUMO1. The weak, but specific interaction with IZUMO1R/JUNO induces IZUMO1 homodimerization. The process follows a tight binding phase where IZUMO1 bends the entire structure towards the sperm membrane side through a thiol-disulfide exchange reaction. The molecule no longer binds to IZUMO1R/JUNO and instead binds to a putative second oocyte receptor. Interacts with ACE3. Part of a oolemmal binding multimeric complex (IZUMO1 complex) composed at least of IZUMO1 and GLIPR1L1; the complex assemblage is influenced by the maturation status of the male germ cell. Interacts with GLIPR1L1. Interacts with FREY; the interaction retains IZUMO1 at the endoplasmic reticulum membrane and coordinates IZUMO1 complex assembly. Interacts with WDR54. Forms a complex with SPACA6 and TMEM81 on spermatocyte cell membrane. In terms of processing, N-glycosylated. Glycosylation is not essential for fusion and for proper protein trafficking in sperm. Post-translationally, phosphorylated. The cytoplasmic C-terminus is phosphorylated and undergoes phosphorylation changes during epididymal transit. In terms of tissue distribution, sperm-specific (at protein level). Detectable on sperm surface only after the acrosome reaction. Expressed in spermatozoa, more abundantly expressed in the head than the tail (at protein level).

It is found in the cell membrane. The protein localises to the cytoplasmic vesicle. It localises to the secretory vesicle. The protein resides in the acrosome membrane. Functionally, essential sperm cell-surface protein required for fertilization by acting as a ligand for IZUMO1R/JUNO receptor on egg. The IZUMO1:IZUMO1R/JUNO interaction is a necessary adhesion event between sperm and egg that is required for fertilization but is not sufficient for cell fusion. The ligand-receptor interaction probably does not act as a membrane 'fusogen'. Plays a critical role in sperm-oolemma binding prior to plasma membrane fusion. Can mediate cell-cell fusion in cultured mammalian cells independently of its binding to IZUMO1R/JUNO. This chain is Izumo sperm-egg fusion protein 1, found in Mus musculus (Mouse).